A 311-amino-acid chain; its full sequence is Energy-coupling factor transporter ATP-binding protein EcfA2 (311 aa).

The ABC transporter domain maps to 3-265; that stretch reads IKLKDVKFTF…IAFLEENNLQ (263 aa). Position 40–47 (40–47) interacts with ATP; that stretch reads GQTGSGKT.

Belongs to the ABC transporter superfamily. Energy-coupling factor EcfA family. As to quaternary structure, forms a stable energy-coupling factor (ECF) transporter complex composed of 2 membrane-embedded substrate-binding proteins (S component), 2 ATP-binding proteins (A component) and 2 transmembrane proteins (T component).

It localises to the cell membrane. In terms of biological role, ATP-binding (A) component of a common energy-coupling factor (ECF) ABC-transporter complex. Unlike classic ABC transporters this ECF transporter provides the energy necessary to transport a number of different substrates. This chain is Energy-coupling factor transporter ATP-binding protein EcfA2, found in Mycoplasmopsis synoviae (strain 53) (Mycoplasma synoviae).